The chain runs to 107 residues: Lipid-anchored protein YDL012C (107 aa).

Over residues 1–18 (MSAQDYYGNSASKQSYSR) the composition is skewed to polar residues. The tract at residues 1–86 (MSAQDYYGNS…VQQQPASSGN (86 aa)) is disordered. At Ser2 the chain carries N-acetylserine. Residue Lys13 forms a Glycyl lysine isopeptide (Lys-Gly) (interchain with G-Cter in ubiquitin) linkage. Residues 35–81 (PSQSQQNYYPPQQQQQQYQQQPQYYQQQQPQYYQQHPQQPIYVQQQP) show a composition bias toward low complexity.

Belongs to the CYSTM1 family.

It is found in the cell membrane. This Saccharomyces cerevisiae (strain ATCC 204508 / S288c) (Baker's yeast) protein is Lipid-anchored protein YDL012C.